The following is a 511-amino-acid chain: 2'-acyl-2-O-sulfo-trehalose (hydroxy)phthioceranyltransferase PapA1 (511 aa).

The protein belongs to the PapA acyltransferase family.

It carries out the reaction a (hydroxy)phthioceranyl-[(hydroxy)phthioceranic acid synthase] + 2'-palmitoyl/stearoyl-2-O-sulfo-alpha,alpha-trehalose = a 3'-(hydroxy)phthioceranyl-2'-palmitoyl/stearoyl-2-O-sulfo-alpha,alpha-trehalose + holo-[(hydroxy)phthioceranic acid synthase].. Functionally, required for the biosynthesis of sulfolipid-1 (SL-1), a major mycobacterial cell wall lipid. Catalyzes the acylation of trehalose-2-sulfate-2'-palmitate (SL659) by adding the (hydroxy)phthioceranoyl group at the 3'-position to yield the diacylated intermediate 2-palmitoyl-3-(C43)-phthioceranyl-alpha, alpha'-D-trehalose-2'-sulfate (SL1278). In Mycobacterium tuberculosis (strain CDC 1551 / Oshkosh), this protein is 2'-acyl-2-O-sulfo-trehalose (hydroxy)phthioceranyltransferase PapA1 (papA1).